The chain runs to 199 residues: Gene 66 protein (199 aa).

In Mycobacterium (Mycobacteriophage D29), this protein is Gene 66 protein (66).